The following is a 398-amino-acid chain: MALALVLNSGSSSIKFQLVNPANHATDDPFVSGLVEQIGEKMGRIILKIEGEKVVKEAPIADHSAGLSMSFDLMTEHGCGPSQVDIIAVGHRVVHGGILFSAPELITDEIVEMIRDLIPLAPLHNPANIDGIEVARRILPDVPHVAVFDTGFFHSLPPAAALYAINKDVAAEYGIRRYGFHGTSHEYVSSRVVDLMDKPAEEINTITFHLGNGASMAAVKGGVAVDTSMGMTPLAGLVMGTRTGDIDPGVVFHLARNANMSIDEIDNLMNKKSGVKGLSGVNDFRELHQMIEDGDQDAWSAYNIYIHQLRRYLGSYMVALGRVDCLVFTAGVGENAHFVREDALAGLEMYGIKVDPERNKLPNDGPRLISTDDSTVKVFVIPTNEELAIARYSAKFAE.

Position 8 (Asn-8) interacts with Mg(2+). Lys-15 is an ATP binding site. Arg-92 is a binding site for substrate. Asp-149 serves as the catalytic Proton donor/acceptor. Residues 209–213 (HLGNG), 283–285 (DFR), and 331–335 (GVGEN) each bind ATP. Glu-385 is a Mg(2+) binding site.

Belongs to the acetokinase family. As to quaternary structure, homodimer. Requires Mg(2+) as cofactor. Mn(2+) serves as cofactor.

The protein resides in the cytoplasm. It carries out the reaction acetate + ATP = acetyl phosphate + ADP. The protein operates within metabolic intermediate biosynthesis; acetyl-CoA biosynthesis; acetyl-CoA from acetate: step 1/2. Functionally, catalyzes the formation of acetyl phosphate from acetate and ATP. Can also catalyze the reverse reaction. The chain is Acetate kinase from Corynebacterium efficiens (strain DSM 44549 / YS-314 / AJ 12310 / JCM 11189 / NBRC 100395).